Reading from the N-terminus, the 715-residue chain is Fatty acid oxidation complex subunit alpha (715 aa).

Positions 1–190 (MTTTSAFMLN…KAGLVDDVVP (190 aa)) are enoyl-CoA hydratase. The 3-hydroxyacyl-CoA dehydrogenase stretch occupies residues 306-715 (GPLNSVGILG…WTNGETDQGN (410 aa)).

This sequence in the N-terminal section; belongs to the enoyl-CoA hydratase/isomerase family. In the central section; belongs to the 3-hydroxyacyl-CoA dehydrogenase family. Heterotetramer of two alpha chains (FadJ) and two beta chains (FadI).

It is found in the cytoplasm. The enzyme catalyses a (3S)-3-hydroxyacyl-CoA = a (2E)-enoyl-CoA + H2O. It carries out the reaction a 4-saturated-(3S)-3-hydroxyacyl-CoA = a (3E)-enoyl-CoA + H2O. The catalysed reaction is a (3S)-3-hydroxyacyl-CoA + NAD(+) = a 3-oxoacyl-CoA + NADH + H(+). It catalyses the reaction (3S)-3-hydroxybutanoyl-CoA = (3R)-3-hydroxybutanoyl-CoA. Its pathway is lipid metabolism; fatty acid beta-oxidation. Its function is as follows. Catalyzes the formation of a hydroxyacyl-CoA by addition of water on enoyl-CoA. Also exhibits 3-hydroxyacyl-CoA epimerase and 3-hydroxyacyl-CoA dehydrogenase activities. The polypeptide is Fatty acid oxidation complex subunit alpha (Salmonella newport (strain SL254)).